A 444-amino-acid chain; its full sequence is N-succinylarginine dihydrolase (444 aa).

Residues serine 19 to serine 28, asparagine 110, and histidine 137 to arginine 138 each bind substrate. The active site involves glutamate 174. Residue arginine 214 coordinates substrate. The active site involves histidine 250. Positions 252 and 362 each coordinate substrate. The Nucleophile role is filled by cysteine 368.

This sequence belongs to the succinylarginine dihydrolase family. As to quaternary structure, homodimer.

The enzyme catalyses N(2)-succinyl-L-arginine + 2 H2O + 2 H(+) = N(2)-succinyl-L-ornithine + 2 NH4(+) + CO2. It functions in the pathway amino-acid degradation; L-arginine degradation via AST pathway; L-glutamate and succinate from L-arginine: step 2/5. Its function is as follows. Catalyzes the hydrolysis of N(2)-succinylarginine into N(2)-succinylornithine, ammonia and CO(2). The protein is N-succinylarginine dihydrolase of Aliivibrio fischeri (strain ATCC 700601 / ES114) (Vibrio fischeri).